Consider the following 351-residue polypeptide: Probable protein phosphatase 2C 41 (351 aa).

In terms of domain architecture, PPM-type phosphatase spans 62–348 (FTSICSNRGE…DDISVLCLFF (287 aa)). Mn(2+)-binding residues include D98, G99, D293, and D339.

The protein belongs to the PP2C family. Mg(2+) is required as a cofactor. Mn(2+) serves as cofactor.

The catalysed reaction is O-phospho-L-seryl-[protein] + H2O = L-seryl-[protein] + phosphate. It carries out the reaction O-phospho-L-threonyl-[protein] + H2O = L-threonyl-[protein] + phosphate. The sequence is that of Probable protein phosphatase 2C 41 from Arabidopsis thaliana (Mouse-ear cress).